Reading from the N-terminus, the 396-residue chain is E3 ubiquitin-protein transferase MAEA (396 aa).

The tract at residues 1–124 (MAVQESAAQL…AAASMWKRKR (124 aa)) is extracellular and involved in cell to cell contact. T28 is modified (phosphothreonine). In terms of domain architecture, LisH spans 121-153 (KRKRMDRMMVEHLLRCGYYNTAVKLARQSGIED). Residues 159–216 (MFLTAKEVEESLERRETATCLAWCHDNKSRLRKMKSCLEFSLRIQEFIELVRQNKRLD) form the CTLH domain. Residues 314–381 (CPVCSRSLNK…QDDKVVCPRT (68 aa)) form an RING-Gid-type zinc finger.

Identified in the CTLH complex that contains GID4, RANBP9 and/or RANBP10, MKLN1, MAEA, RMND5A (or alternatively its paralog RMND5B), GID8, ARMC8, WDR26 and YPEL5. Within this complex, MAEA, RMND5A (or alternatively its paralog RMND5B), GID8, WDR26, and RANBP9 and/or RANBP10 form the catalytic core, while GID4, MKLN1, ARMC8 and YPEL5 have ancillary roles. Interacts with F-actin. Autoubiquitinated as component of the CTLH E3 ubiquitin-protein ligase complex (in vitro). In terms of tissue distribution, detected in embryonic fibroblasts. Detected in macrophages. Detected in heart. liver, spleen and kidney (at protein level).

Its subcellular location is the cytoplasm. The protein localises to the nucleus. It is found in the nucleoplasm. The protein resides in the nucleus matrix. It localises to the cell membrane. Its subcellular location is the cytoskeleton. The enzyme catalyses S-ubiquitinyl-[E2 ubiquitin-conjugating enzyme]-L-cysteine + [acceptor protein]-L-lysine = [E2 ubiquitin-conjugating enzyme]-L-cysteine + N(6)-ubiquitinyl-[acceptor protein]-L-lysine.. Functionally, core component of the CTLH E3 ubiquitin-protein ligase complex that selectively accepts ubiquitin from UBE2H and mediates ubiquitination and subsequent proteasomal degradation of the transcription factor HBP1. MAEA and RMND5A are both required for catalytic activity of the CTLH E3 ubiquitin-protein ligase complex. MAEA is required for normal cell proliferation. The CTLH E3 ubiquitin-protein ligase complex is not required for the degradation of enzymes involved in gluconeogenesis, such as FBP1. Plays a role in erythroblast enucleation during erythrocyte maturation and in the development of mature macrophages. Mediates the attachment of erythroid cell to mature macrophages; this MAEA-mediated contact inhibits erythroid cell apoptosis. Participates in erythroblastic island formation, which is the functional unit of definitive erythropoiesis. Associates with F-actin to regulate actin distribution in erythroblasts and macrophages. May contribute to nuclear architecture and cells division events. This Mus musculus (Mouse) protein is E3 ubiquitin-protein transferase MAEA (Maea).